Consider the following 1240-residue polypeptide: DNA excision repair protein ERCC-6-like (1240 aa).

The residue at position 14 (S14) is a Phosphoserine. The stretch at 21–54 (YLRYVQEAKEAAKNGDLEESLKLFNLAKDIFPTK) is one TPR 1 repeat. One can recognise a Helicase ATP-binding domain in the interval 110–278 (SLYKDGRKGG…WSLFDFACQG (169 aa)). 123-130 (DDMGLGKT) contributes to the ATP binding site. A DEAH box motif is present at residues 229 to 232 (DEAH). Positions 467-631 (FLMSLLERLQ…FTKQELKELF (165 aa)) constitute a Helicase C-terminal domain. The tract at residues 736–760 (FPSQQKKKGTEFNKPQPQPSRLLTK) is disordered. Residues 748-760 (NKPQPQPSRLLTK) show a composition bias toward polar residues. 2 positions are modified to phosphoserine: S755 and S773. The tract at residues 778 to 813 (DQSAESEPQEHSEVHDVTSLQGSHHFNSTSDAGTIA) is disordered. Residues 795 to 809 (TSLQGSHHFNSTSDA) are compositionally biased toward polar residues. Position 821 is a phosphoserine (S821). The interval 845 to 879 (QKKGLQASPGQEAPSENLGSFHYLPRESSKASLGP) is disordered. Phosphoserine occurs at positions 966, 998, 1001, and 1021. The tract at residues 974–1085 (KEKSLQSPAA…EVNTSLHSRR (112 aa)) is disordered. Residues 978–998 (LQSPAANSRAKSALTLSLDSS) show a composition bias toward polar residues. Residues 1049 to 1065 (SVKQFDASTPQSGSNPS) are compositionally biased toward polar residues. Phosphothreonine is present on T1057. S1092 and S1112 each carry phosphoserine. Positions 1104-1117 (MEERLDNSSEEESE) are enriched in acidic residues. The tract at residues 1104-1185 (MEERLDNSSE…MPDPPQDLAV (82 aa)) is disordered. Polar residues predominate over residues 1135-1165 (EQPSGATLASGNKSSNLTMSEPTSPAPQSSP). Position 1172 is a phosphoserine (S1172). The stretch at 1191–1224 (YESLVARGKELKECGKIQEALNCLVKALDIKSAD) is one TPR 2 repeat.

The protein belongs to the SNF2/RAD54 helicase family. As to quaternary structure, interacts with PLK1, which phosphorylates it. Both proteins are mutually dependent on each other for correct subcellular localization. Interacts (via N-terminal TPR repeat) with BEND3 (via BEN domains 1 and 3); the interaction is direct. Phosphorylation by PLK1 prevents the association with chromosome arms and restricts its localization to the kinetochore-centromere region. As to expression, expressed mainly in the neural tube and heart of 10.5 dpc embryo. Significantly down-regulated after alcohol exposure in embryonic brain and heart, but not in embryonic kidney, liver, or lung.

The protein resides in the chromosome. Its subcellular location is the centromere. It is found in the kinetochore. It catalyses the reaction ATP + H2O = ADP + phosphate + H(+). Its function is as follows. DNA helicase that acts as a tension sensor that associates with catenated DNA which is stretched under tension until it is resolved during anaphase. Functions as ATP-dependent DNA translocase. Can promote Holliday junction branch migration (in vitro). This Mus musculus (Mouse) protein is DNA excision repair protein ERCC-6-like (Ercc6l).